A 351-amino-acid polypeptide reads, in one-letter code: Methionine import ATP-binding protein MetN (351 aa).

The ABC transporter domain maps to Ile2 to Phe247. Residue Gly38 to Ser45 coordinates ATP.

Belongs to the ABC transporter superfamily. Methionine importer (TC 3.A.1.24) family. As to quaternary structure, the complex is composed of two ATP-binding proteins (MetN), two transmembrane proteins (MetI) and a solute-binding protein (MetQ).

Its subcellular location is the cell membrane. The enzyme catalyses L-methionine(out) + ATP + H2O = L-methionine(in) + ADP + phosphate + H(+). The catalysed reaction is D-methionine(out) + ATP + H2O = D-methionine(in) + ADP + phosphate + H(+). Part of the ABC transporter complex MetNIQ involved in methionine import. Responsible for energy coupling to the transport system. The chain is Methionine import ATP-binding protein MetN from Streptomyces coelicolor (strain ATCC BAA-471 / A3(2) / M145).